A 208-amino-acid polypeptide reads, in one-letter code: Protein GrpE (208 aa).

Residues 1–12 (MTNKDESVEKNT) show a composition bias toward basic and acidic residues. The interval 1 to 59 (MTNKDESVEKNTESTVEETNIKQNIDDSVEQAEESKGHLQDEAIEETSDENVIEEIDPK) is disordered. Polar residues predominate over residues 13–23 (ESTVEETNIKQ). Acidic residues predominate over residues 42 to 55 (EAIEETSDENVIEE).

It belongs to the GrpE family. In terms of assembly, homodimer.

Its subcellular location is the cytoplasm. In terms of biological role, participates actively in the response to hyperosmotic and heat shock by preventing the aggregation of stress-denatured proteins, in association with DnaK and GrpE. It is the nucleotide exchange factor for DnaK and may function as a thermosensor. Unfolded proteins bind initially to DnaJ; upon interaction with the DnaJ-bound protein, DnaK hydrolyzes its bound ATP, resulting in the formation of a stable complex. GrpE releases ADP from DnaK; ATP binding to DnaK triggers the release of the substrate protein, thus completing the reaction cycle. Several rounds of ATP-dependent interactions between DnaJ, DnaK and GrpE are required for fully efficient folding. This Staphylococcus aureus (strain Mu3 / ATCC 700698) protein is Protein GrpE.